The chain runs to 381 residues: Diguanylate cyclase DosC (381 aa).

Heme is bound at residue H98. In terms of domain architecture, GGDEF spans 325 to 381; that stretch reads TPLSVLIIDVDKFKEINDTWGHNTGDEILRKVSFLSQKRLVKSKILGAGSSRKLAVS. Mg(2+) is bound at residue D333. N341 and D350 together coordinate substrate.

Heme serves as cofactor. Requires Mg(2+) as cofactor.

The enzyme catalyses 2 GTP = 3',3'-c-di-GMP + 2 diphosphate. Its pathway is purine metabolism; 3',5'-cyclic di-GMP biosynthesis. Its function is as follows. Globin-coupled heme-based oxygen sensor protein displaying diguanylate cyclase (DGC) activity in response to oxygen availability. Thus, catalyzes the synthesis of cyclic diguanylate (c-di-GMP) via the condensation of 2 GTP molecules. Cyclic-di-GMP is a second messenger which controls cell surface-associated traits in bacteria. The chain is Diguanylate cyclase DosC (dosC) from Shigella flexneri serotype 5b (strain 8401).